The sequence spans 316 residues: Beta-ketoacyl-[acyl-carrier-protein] synthase III (316 aa).

Residues Cys-112 and His-243 contribute to the active site. The interval 244–248 (QANIR) is ACP-binding. Residue Asn-273 is part of the active site.

It belongs to the thiolase-like superfamily. FabH family. Homodimer.

It localises to the cytoplasm. The catalysed reaction is malonyl-[ACP] + acetyl-CoA + H(+) = 3-oxobutanoyl-[ACP] + CO2 + CoA. Its pathway is lipid metabolism; fatty acid biosynthesis. Catalyzes the condensation reaction of fatty acid synthesis by the addition to an acyl acceptor of two carbons from malonyl-ACP. Catalyzes the first condensation reaction which initiates fatty acid synthesis and may therefore play a role in governing the total rate of fatty acid production. Possesses both acetoacetyl-ACP synthase and acetyl transacylase activities. Its substrate specificity determines the biosynthesis of branched-chain and/or straight-chain of fatty acids. This Haemophilus ducreyi (strain 35000HP / ATCC 700724) protein is Beta-ketoacyl-[acyl-carrier-protein] synthase III.